The primary structure comprises 262 residues: uncharacterized protein (262 aa).

6 helical membrane-spanning segments follow: residues isoleucine 21–phenylalanine 41, isoleucine 94–leucine 114, leucine 139–leucine 159, leucine 164–valine 184, isoleucine 205–isoleucine 225, and leucine 240–phenylalanine 260.

The protein localises to the cell membrane. This is an uncharacterized protein from Methanocaldococcus jannaschii (strain ATCC 43067 / DSM 2661 / JAL-1 / JCM 10045 / NBRC 100440) (Methanococcus jannaschii).